Here is a 144-residue protein sequence, read N- to C-terminus: Large ribosomal subunit protein uL15 (144 aa).

The tract at residues 1-48 (MIKLEYLQDPSPRKRRTKLLGRGPSSGHGKTSGRGHKGDGSRSGYKRR) is disordered.

Belongs to the universal ribosomal protein uL15 family. Part of the 50S ribosomal subunit.

In terms of biological role, binds to the 23S rRNA. The protein is Large ribosomal subunit protein uL15 of Chlamydia muridarum (strain MoPn / Nigg).